The following is a 245-amino-acid chain: DNA repair protein RecO (245 aa).

The protein belongs to the RecO family.

Its function is as follows. Involved in DNA repair and RecF pathway recombination. In Chromobacterium violaceum (strain ATCC 12472 / DSM 30191 / JCM 1249 / CCUG 213 / NBRC 12614 / NCIMB 9131 / NCTC 9757 / MK), this protein is DNA repair protein RecO.